A 524-amino-acid chain; its full sequence is Putative UDP-glucuronosyltransferase ugt-56 (524 aa).

The first 20 residues, 1 to 20 (MLWAFIVWLGALCIYGSAFD), serve as a signal peptide directing secretion. N-linked (GlcNAc...) asparagine glycosylation is found at Asn125, Asn277, and Asn335. Residues 488–508 (LIDSSIALVFMLFIFVFVNHF) form a helical membrane-spanning segment.

This sequence belongs to the UDP-glycosyltransferase family.

Its subcellular location is the membrane. The enzyme catalyses glucuronate acceptor + UDP-alpha-D-glucuronate = acceptor beta-D-glucuronoside + UDP + H(+). The polypeptide is Putative UDP-glucuronosyltransferase ugt-56 (ugt-56) (Caenorhabditis elegans).